The sequence spans 314 residues: DNA-directed RNA polymerase subunit alpha (314 aa).

The segment at 1–228 (MIEIEKPRIE…EHLNIFVGLT (228 aa)) is alpha N-terminal domain (alpha-NTD). The segment at 245–314 (KEKVLEMSIE…DLGLGLRKED (70 aa)) is alpha C-terminal domain (alpha-CTD).

Belongs to the RNA polymerase alpha chain family. As to quaternary structure, homodimer. The RNAP catalytic core consists of 2 alpha, 1 beta, 1 beta' and 1 omega subunit. When a sigma factor is associated with the core the holoenzyme is formed, which can initiate transcription.

The catalysed reaction is RNA(n) + a ribonucleoside 5'-triphosphate = RNA(n+1) + diphosphate. Functionally, DNA-dependent RNA polymerase catalyzes the transcription of DNA into RNA using the four ribonucleoside triphosphates as substrates. The sequence is that of DNA-directed RNA polymerase subunit alpha from Staphylococcus aureus (strain bovine RF122 / ET3-1).